The primary structure comprises 179 residues: MSRVGRLPIEIPNGVNVTVTPENVVTVKGPKGELTKAMHEDMNIAVEENNIVVTRPSENVQHKALHGLTRALINNMVVGVTQGYEKTLELVGVGYRAQLKGKDLTLNLGYSHPVEIKAVKGVEYKVPEPTKVVVSGIDKELVGSVAANIRVWRKPEPYKGKGIKYAGEVIRRKEGKTGK.

This sequence belongs to the universal ribosomal protein uL6 family. As to quaternary structure, part of the 50S ribosomal subunit.

Its function is as follows. This protein binds to the 23S rRNA, and is important in its secondary structure. It is located near the subunit interface in the base of the L7/L12 stalk, and near the tRNA binding site of the peptidyltransferase center. In Clostridium novyi (strain NT), this protein is Large ribosomal subunit protein uL6.